Consider the following 555-residue polypeptide: Methyl-coenzyme M reductase subunit alpha (555 aa).

Q152 contributes to the coenzyme F430 binding site. Coenzyme B contacts are provided by residues R230, 261–262 (KH), and R275. Positions 337 and 448 each coordinate coenzyme M.

The protein belongs to the methyl-coenzyme M reductase alpha subunit family. In terms of assembly, MCR is a hexamer of two alpha, two beta, and two gamma chains, forming a dimer of heterotrimers. It depends on coenzyme F430 as a cofactor.

The protein resides in the cytoplasm. It carries out the reaction coenzyme B + methyl-coenzyme M = methane + coenzyme M-coenzyme B heterodisulfide. It functions in the pathway one-carbon metabolism; methyl-coenzyme M reduction; methane from methyl-coenzyme M: step 1/1. Functionally, component of the methyl-coenzyme M reductase (MCR) I that catalyzes the reductive cleavage of methyl-coenzyme M (CoM-S-CH3 or 2-(methylthio)ethanesulfonate) using coenzyme B (CoB or 7-mercaptoheptanoylthreonine phosphate) as reductant which results in the production of methane and the mixed heterodisulfide of CoB and CoM (CoM-S-S-CoB). This is the final step in methanogenesis. The protein is Methyl-coenzyme M reductase subunit alpha (mcrA) of Methanococcus voltae.